A 196-amino-acid chain; its full sequence is Corticoliberin (196 aa).

The N-terminal stretch at 1 to 24 is a signal peptide; that stretch reads MRLPLLLSAGVLLVVSLPCPPCRA. A propeptide spanning residues 25–153 is cleaved from the precursor; it reads LLSRGPIPGA…RQETPERERR (129 aa). The tract at residues 122–158 is disordered; that stretch reads PRRQLDSPAGPAERGEENALGSRQETPERERRSEEPP. Residues 146 to 156 show a composition bias toward basic and acidic residues; the sequence is ETPERERRSEE. I194 carries the isoleucine amide modification.

It belongs to the sauvagine/corticotropin-releasing factor/urotensin I family. In terms of assembly, interacts (via C-terminus) with CRFR1 (via N-terminal extracellular domain). In terms of tissue distribution, produced by the hypothalamus.

It is found in the secreted. Hormone regulating the release of corticotropin from pituitary gland. Induces NLRP6 in intestinal epithelial cells, hence may influence gut microbiota profile. The polypeptide is Corticoliberin (CRH) (Canis lupus familiaris (Dog)).